The chain runs to 345 residues: Probable aldo-keto reductase 3 (345 aa).

Tyr-63 serves as the catalytic Proton donor. His-130 provides a ligand contact to substrate. 209-219 (SPLGRGFFASG) is a binding site for NADP(+).

It belongs to the aldo/keto reductase family.

The polypeptide is Probable aldo-keto reductase 3 (Arabidopsis thaliana (Mouse-ear cress)).